Reading from the N-terminus, the 246-residue chain is ATP synthase subunit a, chloroplastic (246 aa).

Helical transmembrane passes span 35–55 (GQVF…ALVG), 94–114 (VPYI…GALI), 133–153 (INVT…AGLS), and 202–222 (VFAL…GLFA).

The protein belongs to the ATPase A chain family. As to quaternary structure, F-type ATPases have 2 components, CF(1) - the catalytic core - and CF(0) - the membrane proton channel. CF(1) has five subunits: alpha(3), beta(3), gamma(1), delta(1), epsilon(1). CF(0) has four main subunits: a, b, b' and c.

It is found in the plastid. The protein resides in the chloroplast thylakoid membrane. Functionally, key component of the proton channel; it plays a direct role in the translocation of protons across the membrane. The protein is ATP synthase subunit a, chloroplastic of Rhodomonas salina (Cryptomonas salina).